We begin with the raw amino-acid sequence, 299 residues long: MERQLDAYCEHLRSERQVSPHTLSAYRRDLDKVLGWCIKQNIGSWQALDIQRLRSLIARLHAQGQSSRSLARLLSAVRGLYHYLNRECLCDHDPATGLAPPKGERRLPKTLDTDRALQLLEGAVEDDFLARRDQAILELFYSSGLRLSELTGLNLDQLDLADGMVQVLGKGSKTRLLPVGKKAREALEQWLPLRALTNPSDDAVFVSQQGRRLGPRAIQVRVKLAGERELGQNLHPHMLRHSFASHLLESSQDLRAVQELLGHSDIKTTQIYTHLDFQHLAAVYDSAHPRAKRMKGDDS.

A Core-binding (CB) domain is found at 1-85 (MERQLDAYCE…AVRGLYHYLN (85 aa)). A Tyr recombinase domain is found at 106–285 (RLPKTLDTDR…DFQHLAAVYD (180 aa)). Catalysis depends on residues arginine 146, lysine 170, histidine 237, arginine 240, and histidine 263. The O-(3'-phospho-DNA)-tyrosine intermediate role is filled by tyrosine 272.

This sequence belongs to the 'phage' integrase family. XerC subfamily. In terms of assembly, forms a cyclic heterotetrameric complex composed of two molecules of XerC and two molecules of XerD.

It is found in the cytoplasm. Functionally, site-specific tyrosine recombinase, which acts by catalyzing the cutting and rejoining of the recombining DNA molecules. The XerC-XerD complex is essential to convert dimers of the bacterial chromosome into monomers to permit their segregation at cell division. It also contributes to the segregational stability of plasmids. In Pseudomonas fluorescens (strain Pf0-1), this protein is Tyrosine recombinase XerC.